A 684-amino-acid polypeptide reads, in one-letter code: Pescadillo homolog (684 aa).

The disordered stretch occupies residues 284 to 352 (DAAAAEASSN…DSDEEADDEA (69 aa)). Positions 285–294 (AAAAEASSNA) are enriched in low complexity. A compositionally biased stretch (basic and acidic residues) spans 296–310 (TRKDGKKLSTRDVKR). Positions 342–352 (QDSDEEADDEA) are enriched in acidic residues. The 100-residue stretch at 387–486 (PLPMLFSRYV…QILPTDPYRP (100 aa)) folds into the BRCT domain. Disordered stretches follow at residues 508-580 (GYVP…ALLA) and 612-684 (AASL…NKKP). Residues 528 to 543 (ADEDEDEDEDEDEDED) are compositionally biased toward acidic residues. Residues 544–570 (KAGSGRGDDKNVAAREQDAVEKHDKTP) show a composition bias toward basic and acidic residues. Positions 612–624 (AASLKSHKKKKRT) are enriched in basic residues. Positions 663 to 675 (KKKEEKMRLEAKK) are enriched in basic and acidic residues.

This sequence belongs to the pescadillo family. Component of the NOP7 complex, composed of ERB1, NOP7 and YTM1. The complex is held together by ERB1, which interacts with NOP7 via its N-terminal domain and with YTM1 via a high-affinity interaction between the seven-bladed beta-propeller domains of the 2 proteins. The NOP7 complex associates with the 66S pre-ribosome.

It localises to the nucleus. The protein localises to the nucleolus. It is found in the nucleoplasm. Its function is as follows. Component of the NOP7 complex, which is required for maturation of the 25S and 5.8S ribosomal RNAs and formation of the 60S ribosome. In Malassezia globosa (strain ATCC MYA-4612 / CBS 7966) (Dandruff-associated fungus), this protein is Pescadillo homolog.